A 224-amino-acid polypeptide reads, in one-letter code: Urease accessory protein UreF (224 aa).

Belongs to the UreF family. In terms of assembly, ureD, UreF and UreG form a complex that acts as a GTP-hydrolysis-dependent molecular chaperone, activating the urease apoprotein by helping to assemble the nickel containing metallocenter of UreC. The UreE protein probably delivers the nickel.

It is found in the cytoplasm. In terms of biological role, required for maturation of urease via the functional incorporation of the urease nickel metallocenter. This chain is Urease accessory protein UreF, found in Pseudomonas putida (strain ATCC 47054 / DSM 6125 / CFBP 8728 / NCIMB 11950 / KT2440).